An 81-amino-acid polypeptide reads, in one-letter code: uncharacterized protein (81 aa).

The signal sequence occupies residues 1 to 31; it reads MRYNSFLSVLALFNVLLWFTFILAISMTFSA. Residues 52–74 form a helical membrane-spanning segment; the sequence is WFFVLLPYVIGLFFAIFDSATIG.

Its subcellular location is the membrane. This is an uncharacterized protein from Pasteurella multocida (strain Pm70).